A 186-amino-acid chain; its full sequence is Large ribosomal subunit protein uL22 (186 aa).

The tract at residues 161–186 (VDDEPAKKKLSKKKLQRQKEKMLRSE) is disordered. A compositionally biased stretch (basic and acidic residues) spans 177–186 (RQKEKMLRSE).

Belongs to the universal ribosomal protein uL22 family.

This is Large ribosomal subunit protein uL22 (RpL17) from Drosophila pseudoobscura pseudoobscura (Fruit fly).